The chain runs to 257 residues: Snake venom serine protease 3 (257 aa).

A signal peptide spans 1–18 (MVLIRVLANLLILQLSYA). A propeptide spanning residues 19-24 (QKSSEL) is cleaved from the precursor. The 224-residue stretch at 25–248 (VIGGDECNIN…YTDWIQNIIA (224 aa)) folds into the Peptidase S1 domain. 6 cysteine pairs are disulfide-bonded: C31–C163, C50–C66, C98–C255, C142–C209, C174–C188, and C199–C224. N44 carries N-linked (GlcNAc...) asparagine glycosylation. Residue H65 is the Charge relay system of the active site. N103 carries an N-linked (GlcNAc...) asparagine glycan. D110 (charge relay system) is an active-site residue. N117 and N154 each carry an N-linked (GlcNAc...) asparagine glycan. The active-site Charge relay system is the S203. N250 carries N-linked (GlcNAc...) asparagine glycosylation.

It belongs to the peptidase S1 family. Snake venom subfamily. Monomer. As to expression, expressed by the venom gland.

The protein resides in the secreted. Its function is as follows. Snake venom serine protease that may act in the hemostasis system of the prey. In Protobothrops flavoviridis (Habu), this protein is Snake venom serine protease 3 (TLF3).